Here is a 365-residue protein sequence, read N- to C-terminus: Methylthioribose-1-phosphate isomerase (365 aa).

Aspartate 249 (proton donor) is an active-site residue.

The protein belongs to the eIF-2B alpha/beta/delta subunits family. MtnA subfamily.

It localises to the cytoplasm. It is found in the nucleus. The enzyme catalyses 5-(methylsulfanyl)-alpha-D-ribose 1-phosphate = 5-(methylsulfanyl)-D-ribulose 1-phosphate. It functions in the pathway amino-acid biosynthesis; L-methionine biosynthesis via salvage pathway; L-methionine from S-methyl-5-thio-alpha-D-ribose 1-phosphate: step 1/6. Its function is as follows. Catalyzes the interconversion of methylthioribose-1-phosphate (MTR-1-P) into methylthioribulose-1-phosphate (MTRu-1-P). In Ostreococcus lucimarinus (strain CCE9901), this protein is Methylthioribose-1-phosphate isomerase.